The following is a 436-amino-acid chain: 3-ketoacyl-CoA thiolase (436 aa).

Residue Cys99 is the Acyl-thioester intermediate of the active site. Residues His392 and Cys422 each act as proton acceptor in the active site.

This sequence belongs to the thiolase-like superfamily. Thiolase family. As to quaternary structure, heterotetramer of two alpha chains (FadJ) and two beta chains (FadI).

It is found in the cytoplasm. It catalyses the reaction an acyl-CoA + acetyl-CoA = a 3-oxoacyl-CoA + CoA. It participates in lipid metabolism; fatty acid beta-oxidation. Its function is as follows. Catalyzes the final step of fatty acid oxidation in which acetyl-CoA is released and the CoA ester of a fatty acid two carbons shorter is formed. In Salmonella paratyphi B (strain ATCC BAA-1250 / SPB7), this protein is 3-ketoacyl-CoA thiolase.